Reading from the N-terminus, the 131-residue chain is Large ribosomal subunit protein bL19 (131 aa).

Residues 1-11 show a composition bias toward polar residues; it reads MEETMNNQEAP. A disordered region spans residues 1-20; it reads MEETMNNQEAPETSEEETVA.

The protein belongs to the bacterial ribosomal protein bL19 family.

In terms of biological role, this protein is located at the 30S-50S ribosomal subunit interface and may play a role in the structure and function of the aminoacyl-tRNA binding site. The polypeptide is Large ribosomal subunit protein bL19 (Dehalococcoides mccartyi (strain ATCC BAA-2100 / JCM 16839 / KCTC 5957 / BAV1)).